A 397-amino-acid polypeptide reads, in one-letter code: MEKTIAINAGSSSLKFQLYDMPSERVITAGIVERIGLKDSIFTITVDGEKIKEIIDIPDHEIAVQMLLEKLINHKVIGSYDEITGIGHRVVHGGERFPESVYIDDQVIKDIEALSELAPLHNPANVTGIKAFRKILPDVVSVAVFDTAFHQTMPPASYLYSLPYSYYEDYGIRKYGFHGTSHKYVSERAAELLGRPVEELRLLTCHLGNGASIAAIEGGKSMDTSMGFTPLAGVSMGTRSGNIDPALIPFIMEKTGKTAEQVLDVLNKESGMLGVSGISSDLRDLEDEAAKGNDRAELALQVFVDRIHKYIGSYAARMNGVDAIIFTAGIGENSSYIREKVLRGLEFMGVYWDPALNQVRGEERFLNYPHSPVKVIIIPTNEELMIARDVETIKNNH.

N8 is a Mg(2+) binding site. Residue K15 coordinates ATP. R89 contributes to the substrate binding site. The active-site Proton donor/acceptor is D146. Residues 206-210 (HLGNG), 281-283 (DLR), and 329-333 (GIGEN) contribute to the ATP site. Position 382 (E382) interacts with Mg(2+).

This sequence belongs to the acetokinase family. As to quaternary structure, homodimer. Requires Mg(2+) as cofactor. The cofactor is Mn(2+).

The protein localises to the cytoplasm. It catalyses the reaction acetate + ATP = acetyl phosphate + ADP. The protein operates within metabolic intermediate biosynthesis; acetyl-CoA biosynthesis; acetyl-CoA from acetate: step 1/2. Catalyzes the formation of acetyl phosphate from acetate and ATP. Can also catalyze the reverse reaction. In Listeria monocytogenes serotype 4b (strain F2365), this protein is Acetate kinase 2.